Consider the following 522-residue polypeptide: ATP synthase subunit alpha (522 aa).

176–183 (GDRQTGKT) provides a ligand contact to ATP.

The protein belongs to the ATPase alpha/beta chains family. In terms of assembly, F-type ATPases have 2 components, CF(1) - the catalytic core - and CF(0) - the membrane proton channel. CF(1) has five subunits: alpha(3), beta(3), gamma(1), delta(1), epsilon(1). CF(0) has four main subunits: a, b, b' and c.

It localises to the cell membrane. The enzyme catalyses ATP + H2O + 4 H(+)(in) = ADP + phosphate + 5 H(+)(out). Functionally, produces ATP from ADP in the presence of a proton gradient across the membrane. The alpha chain is a regulatory subunit. This chain is ATP synthase subunit alpha, found in Chloroflexus aggregans (strain MD-66 / DSM 9485).